The following is a 213-amino-acid chain: Kynurenine formamidase (213 aa).

Tryptophan 18 provides a ligand contact to substrate. Residues histidine 48, histidine 52, and aspartate 54 each coordinate Zn(2+). Catalysis depends on histidine 58, which acts as the Proton donor/acceptor. Histidine 160 and glutamate 172 together coordinate Zn(2+).

The protein belongs to the Cyclase 1 superfamily. KynB family. In terms of assembly, homodimer. Zn(2+) is required as a cofactor.

The catalysed reaction is N-formyl-L-kynurenine + H2O = L-kynurenine + formate + H(+). The protein operates within amino-acid degradation; L-tryptophan degradation via kynurenine pathway; L-kynurenine from L-tryptophan: step 2/2. Catalyzes the hydrolysis of N-formyl-L-kynurenine to L-kynurenine, the second step in the kynurenine pathway of tryptophan degradation. In Burkholderia cenocepacia (strain HI2424), this protein is Kynurenine formamidase.